A 385-amino-acid polypeptide reads, in one-letter code: Bifunctional chorismate mutase/prephenate dehydratase (385 aa).

The Chorismate mutase domain maps to 1 to 92 (MPSKNDLLSF…ESVLTQKKLL (92 aa)). Positions 11, 28, 39, 48, 52, 84, and 88 each coordinate substrate. In terms of domain architecture, Prephenate dehydratase spans 105–285 (SFSFLGPKGS…NITRFILLSR (181 aa)). The tract at residues 286 to 385 (KPVSISSKIP…PSENITPIIP (100 aa)) is regulatory. Positions 299–376 (TLIFNTGQES…KFIKILGCYP (78 aa)) constitute an ACT domain.

It localises to the cytoplasm. The catalysed reaction is chorismate = prephenate. The enzyme catalyses prephenate + H(+) = 3-phenylpyruvate + CO2 + H2O. It participates in amino-acid biosynthesis; L-phenylalanine biosynthesis; phenylpyruvate from prephenate: step 1/1. Its pathway is metabolic intermediate biosynthesis; prephenate biosynthesis; prephenate from chorismate: step 1/1. In terms of biological role, catalyzes the Claisen rearrangement of chorismate to prephenate and the decarboxylation/dehydration of prephenate to phenylpyruvate. The polypeptide is Bifunctional chorismate mutase/prephenate dehydratase (pheA) (Buchnera aphidicola subsp. Schizaphis graminum (strain Sg)).